The chain runs to 277 residues: Bifunctional protein FolD 1 (277 aa).

NADP(+) contacts are provided by residues 162–164 (GDS) and serine 187.

Belongs to the tetrahydrofolate dehydrogenase/cyclohydrolase family. As to quaternary structure, homodimer.

The enzyme catalyses (6R)-5,10-methylene-5,6,7,8-tetrahydrofolate + NADP(+) = (6R)-5,10-methenyltetrahydrofolate + NADPH. It carries out the reaction (6R)-5,10-methenyltetrahydrofolate + H2O = (6R)-10-formyltetrahydrofolate + H(+). Its pathway is one-carbon metabolism; tetrahydrofolate interconversion. In terms of biological role, catalyzes the oxidation of 5,10-methylenetetrahydrofolate to 5,10-methenyltetrahydrofolate and then the hydrolysis of 5,10-methenyltetrahydrofolate to 10-formyltetrahydrofolate. The polypeptide is Bifunctional protein FolD 1 (Syntrophomonas wolfei subsp. wolfei (strain DSM 2245B / Goettingen)).